The chain runs to 85 residues: Hepcidin (85 aa).

The N-terminal stretch at 1-22 (MALSTRIQAACLLLLLLASVAS) is a signal peptide. A propeptide spanning residues 23–54 (VSVLPHQTGQLTDLRAQDTAGAEAGLQPTLQL) is cleaved from the precursor. 4 disulfide bridges follow: Cys67–Cys83, Cys70–Cys73, Cys71–Cys79, and Cys74–Cys82.

Belongs to the hepcidin family. In terms of assembly, interacts with SLC40A1; this interaction promotes SLC40A1 rapid ubiquitination.

The protein localises to the secreted. Functionally, liver-produced hormone that constitutes the main circulating regulator of iron absorption and distribution across tissues. Acts by promoting endocytosis and degradation of ferroportin/SLC40A1, leading to the retention of iron in iron-exporting cells and decreased flow of iron into plasma. Controls the major flows of iron into plasma: absorption of dietary iron in the intestine, recycling of iron by macrophages, which phagocytose old erythrocytes and other cells, and mobilization of stored iron from hepatocytes. Its function is as follows. Has strong antimicrobial activity against E.coli ML35P N.cinerea and weaker against S.epidermidis, S.aureus and group b streptococcus bacteria. Active against the fungus C.albicans. No activity against P.aeruginosa. The protein is Hepcidin (HAMP) of Canis lupus familiaris (Dog).